Consider the following 308-residue polypeptide: 1-acyl-sn-glycerol-3-phosphate acyltransferase (308 aa).

Transmembrane regions (helical) follow at residues 65-85, 124-144, and 148-168; these read FLSM…LLPW, AIYI…WLIP, and VTIA…YVLA. The short motif at 130 to 135 is the HXXXXD motif element; sequence HASLVD.

It belongs to the 1-acyl-sn-glycerol-3-phosphate acyltransferase family.

It is found in the membrane. It carries out the reaction a 1-acyl-sn-glycero-3-phosphate + an acyl-CoA = a 1,2-diacyl-sn-glycero-3-phosphate + CoA. Its function is as follows. Converts lysophosphatidic acid (LPA) into phosphatidic acid by incorporating acyl moiety at the 2 position. This enzyme shows a preference for medium-chain-length fatty acyl-coenzyme a substrates. The chain is 1-acyl-sn-glycerol-3-phosphate acyltransferase from Cocos nucifera (Coconut palm).